Reading from the N-terminus, the 155-residue chain is Small ribosomal subunit protein uS7 (155 aa).

Belongs to the universal ribosomal protein uS7 family. As to quaternary structure, part of the 30S ribosomal subunit. Contacts proteins S9 and S11.

One of the primary rRNA binding proteins, it binds directly to 16S rRNA where it nucleates assembly of the head domain of the 30S subunit. Is located at the subunit interface close to the decoding center, probably blocks exit of the E-site tRNA. The sequence is that of Small ribosomal subunit protein uS7 from Mesoplasma florum (strain ATCC 33453 / NBRC 100688 / NCTC 11704 / L1) (Acholeplasma florum).